Here is a 392-residue protein sequence, read N- to C-terminus: Histidinol-phosphate aminotransferase 2 (392 aa).

Lys-228 is subject to N6-(pyridoxal phosphate)lysine.

This sequence belongs to the class-II pyridoxal-phosphate-dependent aminotransferase family. Histidinol-phosphate aminotransferase subfamily. Homodimer. The cofactor is pyridoxal 5'-phosphate.

The enzyme catalyses L-histidinol phosphate + 2-oxoglutarate = 3-(imidazol-4-yl)-2-oxopropyl phosphate + L-glutamate. Its pathway is amino-acid biosynthesis; L-histidine biosynthesis; L-histidine from 5-phospho-alpha-D-ribose 1-diphosphate: step 7/9. The chain is Histidinol-phosphate aminotransferase 2 from Nitrosospira multiformis (strain ATCC 25196 / NCIMB 11849 / C 71).